The sequence spans 470 residues: Sulfate adenylyltransferase subunit 1 (470 aa).

Residues 22–238 (KELLRFITCG…ETIKIDYAYT (217 aa)) form the tr-type G domain. A G1 region spans residues 31-38 (GSVDDGKS). A GTP-binding site is contributed by 31–38 (GSVDDGKS). The tract at residues 89–93 (GITID) is G2. Residues 110–113 (DTPG) form a G3 region. GTP contacts are provided by residues 110–114 (DTPGH) and 165–168 (NKMD). Residues 165-168 (NKMD) form a G4 region. The interval 202 to 204 (SAL) is G5.

Belongs to the TRAFAC class translation factor GTPase superfamily. Classic translation factor GTPase family. CysN/NodQ subfamily. In terms of assembly, heterodimer composed of CysD, the smaller subunit, and CysN.

The catalysed reaction is sulfate + ATP + H(+) = adenosine 5'-phosphosulfate + diphosphate. It functions in the pathway sulfur metabolism; hydrogen sulfide biosynthesis; sulfite from sulfate: step 1/3. In terms of biological role, with CysD forms the ATP sulfurylase (ATPS) that catalyzes the adenylation of sulfate producing adenosine 5'-phosphosulfate (APS) and diphosphate, the first enzymatic step in sulfur assimilation pathway. APS synthesis involves the formation of a high-energy phosphoric-sulfuric acid anhydride bond driven by GTP hydrolysis by CysN coupled to ATP hydrolysis by CysD. The polypeptide is Sulfate adenylyltransferase subunit 1 (Francisella tularensis subsp. tularensis (strain WY96-3418)).